Consider the following 203-residue polypeptide: Snake venom metalloproteinase fibrolase (203 aa).

Q1 bears the Pyrrolidone carboxylic acid mark. In terms of domain architecture, Peptidase M12B spans 7 to 203 (RYVQLVIVAD…NNPQCILNKP (197 aa)). Disulfide bonds link C118/C198, C158/C182, and C160/C165. Zn(2+) is bound at residue H143. E144 is an active-site residue. Zn(2+) is bound by residues H147 and H153.

The protein belongs to the venom metalloproteinase (M12B) family. P-I subfamily. In terms of assembly, monomer. Requires Zn(2+) as cofactor. In terms of tissue distribution, expressed by the venom gland.

Its subcellular location is the secreted. It carries out the reaction Hydrolysis of 14-Ala-|-Leu-15 in insulin B chain and 413-Lys-|-Leu-414 in alpha-chain of fibrinogen.. With respect to regulation, is inhibited by EDTA, o-phenanthroline and tetraethylenepentamine. Its function is as follows. Snake venom zinc metalloprotease that exhibits direct fibrinolytic activity. The chain is Snake venom metalloproteinase fibrolase from Agkistrodon contortrix contortrix (Southern copperhead).